A 325-amino-acid polypeptide reads, in one-letter code: Coiled-coil domain-containing protein 160 (325 aa).

Disordered regions lie at residues 18 to 45 (SAQD…KGME) and 81 to 123 (ENKR…CSTD). Basic and acidic residues predominate over residues 81–91 (ENKRNISKNET). Positions 92–123 (DTNSASYESSNVDVTTEESFNSTEDNSTCSTD) are enriched in polar residues. A coiled-coil region spans residues 144 to 288 (KLCLNLLNEE…SVIKNELRTE (145 aa)).

The protein belongs to the CCDC160 family.

This Homo sapiens (Human) protein is Coiled-coil domain-containing protein 160 (CCDC160).